Consider the following 252-residue polypeptide: Large ribosomal subunit protein uL4 (252 aa).

It belongs to the universal ribosomal protein uL4 family. In terms of assembly, part of the 50S ribosomal subunit.

Functionally, one of the primary rRNA binding proteins, this protein initially binds near the 5'-end of the 23S rRNA. It is important during the early stages of 50S assembly. It makes multiple contacts with different domains of the 23S rRNA in the assembled 50S subunit and ribosome. Forms part of the polypeptide exit tunnel. This Methanocaldococcus jannaschii (strain ATCC 43067 / DSM 2661 / JAL-1 / JCM 10045 / NBRC 100440) (Methanococcus jannaschii) protein is Large ribosomal subunit protein uL4.